A 231-amino-acid polypeptide reads, in one-letter code: mRNA-decapping enzyme subunit 1 (231 aa).

The interval 92-120 (QNGSNNIQVNNGSDNSNRNSSGNGNSYKS) is disordered. A compositionally biased stretch (low complexity) spans 101–120 (NNGSDNSNRNSSGNGNSYKS).

Belongs to the DCP1 family. In terms of assembly, component of the decapping complex composed of DCP1 and DCP2. Interacts with mRNAs, DHH1, LSM1, LSM2, LSM3, LSM4, LSM5, LSM6, LSM7, and the cap-binding proteins PAB1 and TIF4632/eIF-4G. In terms of processing, phosphorylated.

It localises to the cytoplasm. The protein resides in the P-body. Functionally, component of the decapping complex necessary for the degradation of mRNAs, both in normal mRNA turnover and in nonsense-mediated mRNA decay. Removes the 7-methyl guanine cap structure from mRNA molecules, yielding a 5'-phosphorylated mRNA fragment and 7m-GDP. Decapping is the major pathway of mRNA degradation in yeast. It occurs through deadenylation, decapping and subsequent 5' to 3' exonucleolytic decay of the transcript body. DCP1 is activated by the DEAD-box helicase DHH1 and destabilizes the eIF-4F cap-binding complex from the mRNA. This chain is mRNA-decapping enzyme subunit 1 (DCP1), found in Saccharomyces cerevisiae (strain ATCC 204508 / S288c) (Baker's yeast).